Here is a 134-residue protein sequence, read N- to C-terminus: Large ribosomal subunit protein bL20 (134 aa).

Belongs to the bacterial ribosomal protein bL20 family.

Functionally, binds directly to 23S ribosomal RNA and is necessary for the in vitro assembly process of the 50S ribosomal subunit. It is not involved in the protein synthesizing functions of that subunit. This Brucella anthropi (strain ATCC 49188 / DSM 6882 / CCUG 24695 / JCM 21032 / LMG 3331 / NBRC 15819 / NCTC 12168 / Alc 37) (Ochrobactrum anthropi) protein is Large ribosomal subunit protein bL20.